A 406-amino-acid polypeptide reads, in one-letter code: Serine/threonine transporter SstT (406 aa).

A run of 9 helical transmembrane segments spans residues 11–31 (IGLV…GWLM), 45–65 (FVGA…MAAI), 79–99 (VLIM…VASF), 141–161 (AIAN…GLAL), 185–205 (FVIA…IAET), 216–236 (LLTI…PIIV), 298–318 (MAGA…TLGV), 330–350 (VVAT…LLLI), and 357–377 (FNIP…IGVV).

The protein belongs to the dicarboxylate/amino acid:cation symporter (DAACS) (TC 2.A.23) family.

Its subcellular location is the cell inner membrane. It carries out the reaction L-serine(in) + Na(+)(in) = L-serine(out) + Na(+)(out). The catalysed reaction is L-threonine(in) + Na(+)(in) = L-threonine(out) + Na(+)(out). In terms of biological role, involved in the import of serine and threonine into the cell, with the concomitant import of sodium (symport system). In Psychrobacter sp. (strain PRwf-1), this protein is Serine/threonine transporter SstT.